The chain runs to 194 residues: Crossover junction endodeoxyribonuclease RuvC (194 aa).

Residues aspartate 7, glutamate 68, and aspartate 141 contribute to the active site. Residues aspartate 7, glutamate 68, and aspartate 141 each contribute to the Mg(2+) site.

This sequence belongs to the RuvC family. Homodimer which binds Holliday junction (HJ) DNA. The HJ becomes 2-fold symmetrical on binding to RuvC with unstacked arms; it has a different conformation from HJ DNA in complex with RuvA. In the full resolvosome a probable DNA-RuvA(4)-RuvB(12)-RuvC(2) complex forms which resolves the HJ. Mg(2+) is required as a cofactor.

It localises to the cytoplasm. The enzyme catalyses Endonucleolytic cleavage at a junction such as a reciprocal single-stranded crossover between two homologous DNA duplexes (Holliday junction).. Its function is as follows. The RuvA-RuvB-RuvC complex processes Holliday junction (HJ) DNA during genetic recombination and DNA repair. Endonuclease that resolves HJ intermediates. Cleaves cruciform DNA by making single-stranded nicks across the HJ at symmetrical positions within the homologous arms, yielding a 5'-phosphate and a 3'-hydroxyl group; requires a central core of homology in the junction. The consensus cleavage sequence is 5'-(A/T)TT(C/G)-3'. Cleavage occurs on the 3'-side of the TT dinucleotide at the point of strand exchange. HJ branch migration catalyzed by RuvA-RuvB allows RuvC to scan DNA until it finds its consensus sequence, where it cleaves and resolves the cruciform DNA. The sequence is that of Crossover junction endodeoxyribonuclease RuvC from Mycolicibacterium vanbaalenii (strain DSM 7251 / JCM 13017 / BCRC 16820 / KCTC 9966 / NRRL B-24157 / PYR-1) (Mycobacterium vanbaalenii).